The sequence spans 211 residues: Nucleoside triphosphate pyrophosphatase (211 aa).

Residue Asp76 is the Proton acceptor of the active site.

Belongs to the Maf family. Requires a divalent metal cation as cofactor.

It is found in the cytoplasm. It carries out the reaction a ribonucleoside 5'-triphosphate + H2O = a ribonucleoside 5'-phosphate + diphosphate + H(+). It catalyses the reaction a 2'-deoxyribonucleoside 5'-triphosphate + H2O = a 2'-deoxyribonucleoside 5'-phosphate + diphosphate + H(+). In terms of biological role, nucleoside triphosphate pyrophosphatase. May have a dual role in cell division arrest and in preventing the incorporation of modified nucleotides into cellular nucleic acids. This is Nucleoside triphosphate pyrophosphatase from Saccharopolyspora erythraea (strain ATCC 11635 / DSM 40517 / JCM 4748 / NBRC 13426 / NCIMB 8594 / NRRL 2338).